The following is a 913-amino-acid chain: Protein SEY1 homolog (913 aa).

Residues 1 to 825 lie on the Cytoplasmic side of the membrane; the sequence is MTDVNKTQII…ETGGHMSLKN (825 aa). Residues 33 to 288 enclose the GB1/RHD3-type G domain; it reads GFNYNVIAIL…IPADGFAQYC (256 aa). 43–50 is a GTP binding site; the sequence is GSQSSGKS. A helical transmembrane segment spans residues 826–846; the sequence is VPFAFWVILLILGWNEILMFT. Residues 847-849 lie on the Lumenal side of the membrane; it reads RLF. The chain crosses the membrane as a helical span at residues 850-870; that stretch reads FRLNIILPMLIGFIIIVISCL. At 871–913 the chain is on the cytoplasmic side; sequence YTGNAQILSYINKIIFIVIKNLYNFYKHLQTIGHQTTKPEKVE.

It belongs to the TRAFAC class dynamin-like GTPase superfamily. GB1/RHD3 GTPase family. RHD3 subfamily.

The protein resides in the endoplasmic reticulum membrane. In terms of biological role, probable GTP-binding protein involved in generating and maintaining the structure of the tubular endoplasmic reticulum network. The chain is Protein SEY1 homolog from Plasmodium berghei (strain Anka).